The chain runs to 201 residues: MNVRAALPPCSILLLAGGRGQRMGGRDKGLIEWQGKALIEHLHALTRPLTDDLIISCNRNIERYAQYADQLVKDDDTDFNGPLAGIRAALPRARHQWLLVLPCDGPLVDEPLLRAMREKAFEYPQRPVMVREGQHWQPLLCMIPVACAATLEAAWLAGERSPRRAMEPLQPVAVQLEANDPRLANLNTPCLLAGINENDRK.

Residues 15 to 17, Lys28, Asp74, and Asp104 contribute to the GTP site; that span reads LAG. Asp104 provides a ligand contact to Mg(2+).

Belongs to the MobA family. In terms of assembly, monomer. Requires Mg(2+) as cofactor.

It localises to the cytoplasm. The enzyme catalyses Mo-molybdopterin + GTP + H(+) = Mo-molybdopterin guanine dinucleotide + diphosphate. Transfers a GMP moiety from GTP to Mo-molybdopterin (Mo-MPT) cofactor (Moco or molybdenum cofactor) to form Mo-molybdopterin guanine dinucleotide (Mo-MGD) cofactor. This Pseudomonas syringae pv. tomato (strain ATCC BAA-871 / DC3000) protein is Molybdenum cofactor guanylyltransferase.